Reading from the N-terminus, the 529-residue chain is MQPPRPVRRALLSVSDKTGILAFARSLSERGVELLSTGGTARLLAEAGLPVTEVSDYTGFPEMMDGRVKTLHPKVHGGILGRRDIDDAIMREHDIAPIDMVVVNLYPFAATVARAECTREEAVENIDIGGPTMVRSAAKNHKDVAIVVNSANYPAVVAEMDQHSGSLTLETRFDLAIKAFEHTAAYDSMIANYFGSQVPAYHGDAKQPSGRFPRTLNLNFIKKQDMRYGENSHQMAAFYTDPETPEASVATAQQLQGKALSYNNIADTDAALECVKTFTEAACVIVKHANPCGVATSDTLLAAYNRAYQTDPTSAFGGIIAFNRPLDADTAKAIVSRQFVEVIIAPAVDDDALGVLAGKQNVRVLACGNLQQPSPGLDFKRVNGGLLVQERDVGMVDLQDLSVVTERQPTEEEMRDALFCWKVAKFVKSNAIVYARYQRTIGIGAGQMSRVYSAKIAGIKAADEGLDVKGSAMASDAFFPFRDGIDAAAAVGVRCVIQPGGSIHDNEIIAAANEHGIAMIFTHMRHFRH.

One can recognise an MGS-like domain in the interval 1 to 148 (MQPPRPVRRA…KNHKDVAIVV (148 aa)).

Belongs to the PurH family.

The enzyme catalyses (6R)-10-formyltetrahydrofolate + 5-amino-1-(5-phospho-beta-D-ribosyl)imidazole-4-carboxamide = 5-formamido-1-(5-phospho-D-ribosyl)imidazole-4-carboxamide + (6S)-5,6,7,8-tetrahydrofolate. The catalysed reaction is IMP + H2O = 5-formamido-1-(5-phospho-D-ribosyl)imidazole-4-carboxamide. Its pathway is purine metabolism; IMP biosynthesis via de novo pathway; 5-formamido-1-(5-phospho-D-ribosyl)imidazole-4-carboxamide from 5-amino-1-(5-phospho-D-ribosyl)imidazole-4-carboxamide (10-formyl THF route): step 1/1. It functions in the pathway purine metabolism; IMP biosynthesis via de novo pathway; IMP from 5-formamido-1-(5-phospho-D-ribosyl)imidazole-4-carboxamide: step 1/1. The chain is Bifunctional purine biosynthesis protein PurH from Sodalis glossinidius (strain morsitans).